An 824-amino-acid polypeptide reads, in one-letter code: Lysine-specific histone demethylase 1B homolog (824 aa).

Residues 1–31 are disordered; it reads MTTELEIDDRKEEEAQIPGETSESEEGDEPV. The SWIRM domain occupies 245-346; sequence PFTDVIANIV…YGAFDFRIDP (102 aa). FAD-binding positions include 352–407, Val-579, Glu-788, and 796–798; these read PKIA…AQII and QTM.

This sequence belongs to the flavin monoamine oxidase family. The cofactor is FAD. As to expression, in hermaphrodites, expressed in gut cells, embryonic cells and sheath cells. Not expressed in sperm or pharyngeal neurons.

The protein resides in the nucleus. The enzyme catalyses N(6),N(6)-dimethyl-L-lysyl(4)-[histone H3] + 2 A + 2 H2O = L-lysyl(4)-[histone H3] + 2 formaldehyde + 2 AH2. Functionally, histone demethylase that demethylates di-methylated 'Lys-4' of histone H3, a specific tag for epigenetic transcriptional activation, thereby acting as a corepressor. Acts by oxidizing the substrate by FAD to generate the corresponding imine that is subsequently hydrolyzed. Plays a role in the mitotic development of the germline. May be involved in H3 demethylation in mitotic cells including gut and embryonic cells. Plays a role in sensitivity upon interstrand cross-link DNA damage, probably by positively regulating the expression of mlh-1. Plays a role in developmental growth and lifespan regulation in response to ultraviolet-induced damage. No obvious role in larval development, sex chromosome segregation or for regulating meiotic crossover frequency. This Caenorhabditis elegans protein is Lysine-specific histone demethylase 1B homolog.